A 243-amino-acid polypeptide reads, in one-letter code: NAD-dependent protein deacetylase (243 aa).

The 243-residue stretch at 1 to 243 (MRNDLETLKH…VSVVKSLMTE (243 aa)) folds into the Deacetylase sirtuin-type domain. Ala-24, Phe-35, Arg-36, Gln-105, Ile-107, Asp-108, and His-123 together coordinate NAD(+). A nicotinamide-binding site is contributed by Phe-35. Nicotinamide contacts are provided by Ile-107 and Asp-108. Residue His-123 is the Proton acceptor of the active site. The Zn(2+) site is built by Cys-131, Cys-134, Cys-151, and Cys-154. NAD(+) contacts are provided by Ser-192, Ser-193, Asn-215, and Asp-232.

The protein belongs to the sirtuin family. Class U subfamily. It depends on Zn(2+) as a cofactor.

The protein resides in the cytoplasm. It carries out the reaction N(6)-acetyl-L-lysyl-[protein] + NAD(+) + H2O = 2''-O-acetyl-ADP-D-ribose + nicotinamide + L-lysyl-[protein]. Its function is as follows. NAD-dependent protein deacetylase which modulates the activities of several enzymes which are inactive in their acetylated form. The polypeptide is NAD-dependent protein deacetylase (Staphylococcus aureus (strain MSSA476)).